Reading from the N-terminus, the 513-residue chain is GMP synthase [glutamine-hydrolyzing] (513 aa).

The Glutamine amidotransferase type-1 domain maps to serine 3–aspartate 200. Cysteine 80 functions as the Nucleophile in the catalytic mechanism. Active-site residues include histidine 174 and glutamate 176. Residues tryptophan 201–arginine 388 form the GMPS ATP-PPase domain. An ATP-binding site is contributed by serine 228–threonine 234.

As to quaternary structure, homodimer.

The catalysed reaction is XMP + L-glutamine + ATP + H2O = GMP + L-glutamate + AMP + diphosphate + 2 H(+). It functions in the pathway purine metabolism; GMP biosynthesis; GMP from XMP (L-Gln route): step 1/1. Functionally, catalyzes the synthesis of GMP from XMP. This Chlorobium phaeovibrioides (strain DSM 265 / 1930) (Prosthecochloris vibrioformis (strain DSM 265)) protein is GMP synthase [glutamine-hydrolyzing].